Here is a 95-residue protein sequence, read N- to C-terminus: Large ribosomal subunit protein bL27 (95 aa).

The propeptide occupies 1–8; sequence MEMNLQFF. Residues 1 to 34 are disordered; sequence MEMNLQFFSHHKGGGSTSNGRDSAGRRLGTKRAD.

The protein belongs to the bacterial ribosomal protein bL27 family. Post-translationally, the N-terminus is cleaved by ribosomal processing cysteine protease Prp.

The protein is Large ribosomal subunit protein bL27 of Pediococcus pentosaceus (strain ATCC 25745 / CCUG 21536 / LMG 10740 / 183-1w).